The following is a 230-amino-acid chain: MNPGTITNREDFLQRIAKQLGREVKLTPPKREYTHRPQDEVLKGASEEELLETFRMVATRIHTDLVECESAKLDDTLRLLIERYHGARILAENDERISAWAPTTSETFDWWDSSQPEASRELAIRADIGITIADAAFAESATIVQYAMPGRSRTISLLPQDHIAIIPKSVLVPRMTQTAQQLATLDRDGLHSPNGVNFISGPSNSADIEMNLIVGVHGPVRVSYVLVHDL.

This sequence belongs to the LutC/YkgG family.

Its function is as follows. Is involved in L-lactate degradation and allows cells to grow with lactate as the sole carbon source. This Exiguobacterium sp. (strain ATCC BAA-1283 / AT1b) protein is Lactate utilization protein C.